The chain runs to 409 residues: MSFIATPQFMHFDEPLPLQSGGSIADYDLAFETYGQLNADKSNAIVVCHALNASHHVAGSYEGQPKSEGWWDNMIGPGKPVDTDKFFVIGINNLGSCFGSTGPMHTNPATGKPYGADFPVVTVEDWVDAQARLLDRLGIQTLAAVLGGSLGGMQALSWSLRYPERMRHAVVVASAPNLNAENIAFNEVARRAIVTDPDFNGGHFYEHGVVPARGLRIARMVGHITYLSDDVMNQKFGRSLRAPTLPAARGSLPPEGTDPTRGGPASDRRDYLYSTQDVEFQIESYLRYQGEKFSGYFDANTYLLITRALDYFDPARCHDGDLTRALAVAKARFLLVSFTTDWRFAPARSREIVKSLLENNRDVSYAEIDAPHGHDAFLLDDPRYMSVMRSYFEGIAKELKTTERAGGAA.

Residues Asn-43 to Asp-380 enclose the AB hydrolase-1 domain. Ser-149 serves as the catalytic Nucleophile. Position 219 (Arg-219) interacts with substrate. Residues Thr-244 to Arg-268 are disordered. Active-site residues include Asp-341 and His-374. Position 375 (Asp-375) interacts with substrate.

It belongs to the AB hydrolase superfamily. MetX family. In terms of assembly, homodimer.

It is found in the cytoplasm. It carries out the reaction L-homoserine + succinyl-CoA = O-succinyl-L-homoserine + CoA. Its pathway is amino-acid biosynthesis; L-methionine biosynthesis via de novo pathway; O-succinyl-L-homoserine from L-homoserine: step 1/1. Transfers a succinyl group from succinyl-CoA to L-homoserine, forming succinyl-L-homoserine. In Comamonas testosteroni (strain DSM 14576 / KF-1) (Pseudomonas testosteroni), this protein is Homoserine O-succinyltransferase.